Reading from the N-terminus, the 376-residue chain is Probable plastid-lipid-associated protein 3, chloroplastic (376 aa).

The N-terminal 53 residues, 1–53 (MATLFTVARPSSLLYVSSINPSKTFSPSISLKLNSLSFSFGYRPKPLRFSKIR), are a transit peptide targeting the chloroplast. The segment at 54–146 (SSLPSESESE…EADAGNGSAV (93 aa)) is disordered. Over residues 85–96 (PDSQPDNVTVNV) the composition is skewed to polar residues. Residues 117–126 (MESDPPRNED) are compositionally biased toward basic and acidic residues.

Belongs to the PAP/fibrillin family.

The protein resides in the plastid. Its subcellular location is the chloroplast. The protein localises to the plastoglobule. In terms of biological role, probably involved in light/cold stress-related jasmonate (JA) biosynthesis. The sequence is that of Probable plastid-lipid-associated protein 3, chloroplastic (PAP3) from Arabidopsis thaliana (Mouse-ear cress).